The primary structure comprises 102 residues: Small ribosomal subunit protein uS10 (102 aa).

The protein belongs to the universal ribosomal protein uS10 family. Part of the 30S ribosomal subunit.

In terms of biological role, involved in the binding of tRNA to the ribosomes. The polypeptide is Small ribosomal subunit protein uS10 (Streptococcus pneumoniae (strain Taiwan19F-14)).